The sequence spans 223 residues: Small ribosomal subunit protein uS3 (223 aa).

Residues L38 to H106 form the KH type-2 domain.

Belongs to the universal ribosomal protein uS3 family. Part of the 30S ribosomal subunit. Forms a tight complex with proteins S10 and S14.

Its function is as follows. Binds the lower part of the 30S subunit head. Binds mRNA in the 70S ribosome, positioning it for translation. This chain is Small ribosomal subunit protein uS3, found in Koribacter versatilis (strain Ellin345).